The chain runs to 252 residues: Probable transcriptional regulatory protein Haur_3030 (252 aa).

It belongs to the TACO1 family.

Its subcellular location is the cytoplasm. The polypeptide is Probable transcriptional regulatory protein Haur_3030 (Herpetosiphon aurantiacus (strain ATCC 23779 / DSM 785 / 114-95)).